A 208-amino-acid polypeptide reads, in one-letter code: Ribosomal RNA large subunit methyltransferase E (208 aa).

5 residues coordinate S-adenosyl-L-methionine: glycine 63, tryptophan 65, aspartate 83, aspartate 99, and aspartate 124. Lysine 164 acts as the Proton acceptor in catalysis.

It belongs to the class I-like SAM-binding methyltransferase superfamily. RNA methyltransferase RlmE family.

The protein resides in the cytoplasm. It carries out the reaction uridine(2552) in 23S rRNA + S-adenosyl-L-methionine = 2'-O-methyluridine(2552) in 23S rRNA + S-adenosyl-L-homocysteine + H(+). Functionally, specifically methylates the uridine in position 2552 of 23S rRNA at the 2'-O position of the ribose in the fully assembled 50S ribosomal subunit. The chain is Ribosomal RNA large subunit methyltransferase E from Alcanivorax borkumensis (strain ATCC 700651 / DSM 11573 / NCIMB 13689 / SK2).